Here is a 465-residue protein sequence, read N- to C-terminus: VGFKAGVKDYKLTYYTPDYETKDTDILAAFRVTPQPGVPPEEAGAAVAAESSTGTWTTVWTDGVTSLDRYKGRCYHIEPVAGEESQFIAYVAYPLDLFEEGSVTNMFTSIVGNVFGFKALRALRLEDLRIPTAYSKTFQGPPHGIQVERDKLNKYGRPLLGCTIKPKLGLSAKNYGRAVYECLRGGLDFTKDDENVNSQPFMRWRDRFLFCAEALYKAQAETGEIKGHYLNATAGTCEEMMKRAIFARELGVPIVMHDYLTGGFTANTSLAHYCRDNGLLLHIHRAMHAVIDRQKNHGMHFRVLAKALRLSGGDHIHAGTVVGKLEGERDITLGFVDLLRDDYFEKDRSRGIYFTQDWVSLPGVLPVASGGIHVWHMPALTEIFGDDSVLQFGGGTLGHPWGNAPGAVANRVALEACVQARNEGRDLAREGNEIIREAAKWSPELAAACEVWKEIKFEFPAMDTL.

K4 is modified (N6,N6,N6-trimethyllysine). N113 and T163 together coordinate substrate. The active-site Proton acceptor is K165. A substrate-binding site is contributed by K167. Mg(2+) contacts are provided by K191, D193, and E194. Residue K191 is modified to N6-carboxylysine. Residue H284 is the Proton acceptor of the active site. Substrate is bound by residues R285, H317, and S369.

Belongs to the RuBisCO large chain family. Type I subfamily. As to quaternary structure, heterohexadecamer of 8 large chains and 8 small chains; disulfide-linked. The disulfide link is formed within the large subunit homodimers. Mg(2+) is required as a cofactor. Post-translationally, the disulfide bond which can form in the large chain dimeric partners within the hexadecamer appears to be associated with oxidative stress and protein turnover.

The protein localises to the plastid. It localises to the chloroplast. The catalysed reaction is 2 (2R)-3-phosphoglycerate + 2 H(+) = D-ribulose 1,5-bisphosphate + CO2 + H2O. The enzyme catalyses D-ribulose 1,5-bisphosphate + O2 = 2-phosphoglycolate + (2R)-3-phosphoglycerate + 2 H(+). Functionally, ruBisCO catalyzes two reactions: the carboxylation of D-ribulose 1,5-bisphosphate, the primary event in carbon dioxide fixation, as well as the oxidative fragmentation of the pentose substrate in the photorespiration process. Both reactions occur simultaneously and in competition at the same active site. This is Ribulose bisphosphate carboxylase large chain from Casuarina equisetifolia (Beach she-oak).